The sequence spans 290 residues: Inositol monophosphatase 2 (290 aa).

Residues glutamate 83, aspartate 103, isoleucine 105, and aspartate 106 each coordinate Mg(2+). Glutamate 83 contacts substrate. Substrate contacts are provided by residues isoleucine 105–threonine 108, glycine 207–serine 209, glutamine 226, and aspartate 233. Residue aspartate 233 participates in Mg(2+) binding.

The protein belongs to the inositol monophosphatase superfamily. As to quaternary structure, homodimer. It depends on Mg(2+) as a cofactor.

The protein resides in the cytoplasm. It carries out the reaction a myo-inositol phosphate + H2O = myo-inositol + phosphate. It functions in the pathway polyol metabolism; myo-inositol biosynthesis; myo-inositol from D-glucose 6-phosphate: step 2/2. Can use myo-inositol monophosphates, scylloinositol 1,4-diphosphate, glucose-1-phosphate, beta-glycerophosphate, and 2'-AMP as substrates. Has been implicated as the pharmacological target for lithium Li(+) action in brain. The polypeptide is Inositol monophosphatase 2 (Impa2) (Rattus norvegicus (Rat)).